The following is a 234-amino-acid chain: Glutathione S-transferase U16 (234 aa).

Residues 5–85 (EEVKLLGVWY…YIDETWNSSA (81 aa)) enclose the GST N-terminal domain. Glutathione-binding positions include 15-16 (SP), 42-43 (SK), 56-57 (KV), and 69-70 (ES). In terms of domain architecture, GST C-terminal spans 92–219 (HPYDRALARF…APEIEKVAEF (128 aa)).

The protein belongs to the GST superfamily. Tau family.

Its subcellular location is the cytoplasm. The protein localises to the cytosol. The catalysed reaction is RX + glutathione = an S-substituted glutathione + a halide anion + H(+). May be involved in the conjugation of reduced glutathione to a wide number of exogenous and endogenous hydrophobic electrophiles and have a detoxification role against certain herbicides. The polypeptide is Glutathione S-transferase U16 (GSTU16) (Arabidopsis thaliana (Mouse-ear cress)).